We begin with the raw amino-acid sequence, 445 residues long: Methylenetetrahydrofolate--tRNA-(uracil-5-)-methyltransferase TrmFO (445 aa).

An FAD-binding site is contributed by 9–14; that stretch reads GGGLAG.

Belongs to the MnmG family. TrmFO subfamily. FAD serves as cofactor.

Its subcellular location is the cytoplasm. It carries out the reaction uridine(54) in tRNA + (6R)-5,10-methylene-5,6,7,8-tetrahydrofolate + NADH + H(+) = 5-methyluridine(54) in tRNA + (6S)-5,6,7,8-tetrahydrofolate + NAD(+). The catalysed reaction is uridine(54) in tRNA + (6R)-5,10-methylene-5,6,7,8-tetrahydrofolate + NADPH + H(+) = 5-methyluridine(54) in tRNA + (6S)-5,6,7,8-tetrahydrofolate + NADP(+). In terms of biological role, catalyzes the folate-dependent formation of 5-methyl-uridine at position 54 (M-5-U54) in all tRNAs. The chain is Methylenetetrahydrofolate--tRNA-(uracil-5-)-methyltransferase TrmFO from Solibacter usitatus (strain Ellin6076).